The primary structure comprises 61 residues: Large ribosomal subunit protein eL24 (61 aa).

Zn(2+)-binding residues include Cys-7, Cys-10, Cys-33, and Cys-37. The C4-type zinc finger occupies Cys-7 to Cys-37.

This sequence belongs to the eukaryotic ribosomal protein eL24 family. Part of the 50S ribosomal subunit. Forms a cluster with proteins L3 and L14. Zn(2+) serves as cofactor.

In terms of biological role, binds to the 23S rRNA. This is Large ribosomal subunit protein eL24 from Saccharolobus islandicus (strain Y.N.15.51 / Yellowstone #2) (Sulfolobus islandicus).